The chain runs to 126 residues: Large ribosomal subunit protein bL17 (126 aa).

It belongs to the bacterial ribosomal protein bL17 family. In terms of assembly, part of the 50S ribosomal subunit. Contacts protein L32.

This is Large ribosomal subunit protein bL17 from Coxiella burnetii (strain CbuG_Q212) (Coxiella burnetii (strain Q212)).